A 298-amino-acid polypeptide reads, in one-letter code: Zinc finger protein-like 1 homolog (298 aa).

A B box-type; degenerate zinc finger spans residues 1-43 (MGLCKCPKRLVTNQFCFEHRVNVCEHCMVQSHPKCIVQSYLQW). An RING-type; atypical zinc finger spans residues 53-101 (CTLCGTTLEQGDCVRLVCYHVFHWDCLNARQAALPANTAPRGHQCPACT). The tract at residues 199-230 (AGDYASSRRPLLPRQSPIGGTDRDDNKYQRRT) is disordered. At Ser-214 the chain carries Phosphoserine. Residues 255-275 (WFLVTAGILAFVLFVYLMAWL) form a helical membrane-spanning segment.

This sequence belongs to the ZFPL1 family.

Its subcellular location is the membrane. In Drosophila erecta (Fruit fly), this protein is Zinc finger protein-like 1 homolog.